A 368-amino-acid chain; its full sequence is Polymerase delta-interacting protein 2 (368 aa).

The transit peptide at 1–51 (MAACTARRALAVGSRWWSRSLTGARWPRPLCAAAGAGAFSPASTTTTRRHL) directs the protein to the mitochondrion. The 126-residue stretch at 235 to 360 (RETTENIRVT…FSLESNKDEK (126 aa)) folds into the ApaG domain. T292 carries the phosphothreonine modification.

Interacts with PCNA and POLD2. Interacts with SSBP1. Interacts with PRIMPOL; leading to enhance DNA polymerase activity of PRIMPOL. Interacts with POLH. Interacts with POLD1; leading to stimulate DNA polymerase activity of POLD1.

The protein resides in the mitochondrion matrix. Its subcellular location is the nucleus. In terms of biological role, involved in DNA damage tolerance by regulating translesion synthesis (TLS) of templates carrying DNA damage lesions such as 8oxoG and abasic sites. May act by stimulating activity of DNA polymerases involved in TLS, such as PRIMPOL and polymerase delta (POLD1). This is Polymerase delta-interacting protein 2 from Homo sapiens (Human).